The chain runs to 339 residues: Ubiquitin carboxyl-terminal hydrolase 50 (339 aa).

Residues 44 to 339 (TGLWNLGNTC…AFCKNSVTQA (296 aa)) enclose the USP domain. The Nucleophile role is filled by Cys53. Residue His327 is the Proton acceptor of the active site.

It belongs to the peptidase C19 family. In terms of tissue distribution, weakly expressed in a few tissues.

The protein resides in the cytoplasm. Its subcellular location is the cytoskeleton. It localises to the microtubule organizing center. The protein localises to the centrosome. It is found in the nucleus. The enzyme catalyses Thiol-dependent hydrolysis of ester, thioester, amide, peptide and isopeptide bonds formed by the C-terminal Gly of ubiquitin (a 76-residue protein attached to proteins as an intracellular targeting signal).. Its function is as follows. Deubiquitinating enzyme that removes conjugated ubiquitin from specific proteins to regulate different cellular processes. Regulates the inflammasome signaling pathway by deubiquitinating 'Lys-63'-linked polyubiquitination of the PYCARD/ASC adapter protein. Regulates the ubiquitination and stability of the ACE2 protein. Acts as a negative regulator of the G2/M checkpoint pathway, by preventing serine/threonine kinase WEE1 degradation, thereby repressing entry into mitosis following activation of the G2/M DNA damage checkpoint. The chain is Ubiquitin carboxyl-terminal hydrolase 50 from Homo sapiens (Human).